Here is a 782-residue protein sequence, read N- to C-terminus: MSKVRVYEYAKEHQVSSKKVIEALKDLGIEVANHMSTINENALRQLDNAIDGTNKKAEAPKKETTSNENGNSKGPNKPNMTNSNEKSNKPNKPAGQANKPATANKSHGAKPATNKPANTSNQTQSSGNKQPAGGQKRNNNNNSNRPGGGNPNRPGGNNRPNRGGNFNNKGRNTKKKGKLNHSTVPPTPPKPKELPEKIVFSESLTVAELAKKLYREPSELIKKLFMLGVVATINQSLDKDAIELICDDYGVQVEEEIKVDVTDLDVYFENELNEAVDESKLVERPPVVTIMGHVDHGKTTLLDSLRNTKVTLGEAGGITQHIGAYQLEIHDKKITFLDTPGHAAFTAMRARGAQITDITILVVAADDGVMPQTIEAINHAKAAGMPIIVAVNKIDKPQANPDRVMQELTEYELVPEAWGGDTIFAPISAKFGEGLENLLDMILLVSEVEELKANPDRRAIGSVIEAELDKGRGPVATLLVQDGTLNIGDPIVVGNTFGRVRAMVNDLGRRVKKVGPSTPVEITGLNDVPQAGDRFVVFEDEKTARNIGETRASRALVAQRSATNRVSLDNLFEHMKAGEMKEVNVIIKADVQGSVEALAASLRKIDVEGVNVKIIHTAVGAINESDITLAAASNAIIIGFNVRPTTQAREAAENESVDIRLHRVIYKAIDEIEAAMKGMLDPEFQEKIIGQAQVRQTINVSKVGTIAGCYVTDGKITRDSGVRIIRDGIVVFEGEIATLKRFKDDAKEVAKGYECGITVQNFNDIKEDDVIEAYVMEEIERK.

The segment at 47–196 is disordered; that stretch reads DNAIDGTNKK…TPPKPKELPE (150 aa). The segment covering 53 to 65 has biased composition (basic and acidic residues); it reads TNKKAEAPKKETT. The span at 66-81 shows a compositional bias: polar residues; that stretch reads SNENGNSKGPNKPNMT. The span at 82 to 93 shows a compositional bias: low complexity; that stretch reads NSNEKSNKPNKP. Residues 115–129 show a composition bias toward polar residues; the sequence is KPANTSNQTQSSGNK. The span at 133 to 170 shows a compositional bias: low complexity; it reads GGQKRNNNNNSNRPGGGNPNRPGGNNRPNRGGNFNNKG. Residues 283–452 enclose the tr-type G domain; that stretch reads ERPPVVTIMG…LLVSEVEELK (170 aa). The G1 stretch occupies residues 292-299; it reads GHVDHGKT. GTP is bound at residue 292-299; the sequence is GHVDHGKT. Residues 317 to 321 are G2; sequence GITQH. The segment at 338–341 is G3; sequence DTPG. GTP-binding positions include 338 to 342 and 392 to 395; these read DTPGH and NKID. Positions 392–395 are G4; it reads NKID. Residues 428 to 430 form a G5 region; sequence SAK.

Belongs to the TRAFAC class translation factor GTPase superfamily. Classic translation factor GTPase family. IF-2 subfamily.

Its subcellular location is the cytoplasm. In terms of biological role, one of the essential components for the initiation of protein synthesis. Protects formylmethionyl-tRNA from spontaneous hydrolysis and promotes its binding to the 30S ribosomal subunits. Also involved in the hydrolysis of GTP during the formation of the 70S ribosomal complex. In Listeria innocua serovar 6a (strain ATCC BAA-680 / CLIP 11262), this protein is Translation initiation factor IF-2.